Consider the following 145-residue polypeptide: MHLIRAAGAVCLAVVLIAGCRFNEDQHQAEGENTAVTQLKSVPYSNFSLRVSYGDGEHNRYEGIYTKNGTQEKAEIQDKLSGVNQEGEEALDEMKMILSELSVTDQMAETEVIHSVLAAFNLDSHYDHIDLKLKLKDGSIREIKK.

Residues 1–29 (MHLIRAAGAVCLAVVLIAGCRFNEDQHQA) form the signal peptide. Residues 67–101 (KNGTQEKAEIQDKLSGVNQEGEEALDEMKMILSEL) adopt a coiled-coil conformation.

This is an uncharacterized protein from Bacillus subtilis (strain 168).